The chain runs to 368 residues: MNSIFRKIVFAAFLLLALPQFALAVRIKDIAAFDGVRENQLIGYGLVVGLNGTGDSDQTKFPVQSLVNTLERMGITINRADITVKNVAAVMVTAALPPFAKQGNSLDVLVSSVGDSKSLAGGTLLMTPLKGADSQIYAVAQGGVLTNSFSYGGQAASVQKNHPTAGRVPGGALVERELPNVLAGRSQLRLNLHQPDFTTASRVAAVINNKFKMTVASLTDPGSVQLAIPDDYQGKTVEFVAALERLEVTPDVMARVVLNERTGTIVIGENVRISTVAVSHGNLTLYVKETPRVSQPAPFSSTGETKVVPRTSIKVTEDRGSLAILQQGANIGDVVRALNALGVTPRDLIGIMQAIKAAGALNAELMVI.

A signal peptide spans 1–24; sequence MNSIFRKIVFAAFLLLALPQFALA.

Belongs to the FlgI family. In terms of assembly, the basal body constitutes a major portion of the flagellar organelle and consists of four rings (L,P,S, and M) mounted on a central rod.

The protein resides in the periplasm. It is found in the bacterial flagellum basal body. Functionally, assembles around the rod to form the L-ring and probably protects the motor/basal body from shearing forces during rotation. The chain is Flagellar P-ring protein from Geotalea uraniireducens (strain Rf4) (Geobacter uraniireducens).